Reading from the N-terminus, the 592-residue chain is Aspartate--tRNA ligase (592 aa).

Glu171 provides a ligand contact to L-aspartate. The tract at residues 195–198 (QLFK) is aspartate. Arg217 contacts L-aspartate. ATP-binding positions include 217–219 (RDE) and Gln226. His448 lines the L-aspartate pocket. Glu482 is an ATP binding site. An L-aspartate-binding site is contributed by Arg489. 534–537 (GLDR) contributes to the ATP binding site.

It belongs to the class-II aminoacyl-tRNA synthetase family. Type 1 subfamily. As to quaternary structure, homodimer.

It localises to the cytoplasm. The catalysed reaction is tRNA(Asp) + L-aspartate + ATP = L-aspartyl-tRNA(Asp) + AMP + diphosphate. Functionally, catalyzes the attachment of L-aspartate to tRNA(Asp) in a two-step reaction: L-aspartate is first activated by ATP to form Asp-AMP and then transferred to the acceptor end of tRNA(Asp). The chain is Aspartate--tRNA ligase from Vibrio vulnificus (strain CMCP6).